Reading from the N-terminus, the 354-residue chain is Neuronal growth regulator 1 (354 aa).

The N-terminal stretch at 1–37 (MDMMLLVQGACCSNQWLAAVLLSLCCLLPSCLPAGQS) is a signal peptide. 3 Ig-like C2-type domains span residues 38–134 (VDFP…VHLT), 139–221 (PKIY…KVVV), and 225–313 (PTIQ…LPLN). Cys-60 and Cys-118 are oxidised to a cystine. 2 N-linked (GlcNAc...) asparagine glycosylation sites follow: Asn-73 and Asn-155. Disulfide bonds link Cys-160–Cys-203 and Cys-245–Cys-297. At Tyr-187 the chain carries Phosphotyrosine. N-linked (GlcNAc...) asparagine glycans are attached at residues Asn-275, Asn-286, Asn-294, and Asn-307. Gly-324 is lipidated: GPI-anchor amidated glycine. A propeptide spans 325–354 (SADVLFSCWYLVLTLSSFTSIFYLKNAILQ) (removed in mature form).

It belongs to the immunoglobulin superfamily. IgLON family.

It localises to the cell membrane. Functionally, may be involved in cell-adhesion. May function as a trans-neural growth-promoting factor in regenerative axon sprouting in the mammalian brain. This is Neuronal growth regulator 1 (NEGR1) from Homo sapiens (Human).